We begin with the raw amino-acid sequence, 373 residues long: Secondary metabolism regulator laeA (373 aa).

Disordered stretches follow at residues 1 to 21 (MFLNGQGGQRPPTVASPPLNV) and 53 to 81 (AAERDPAAGRWHANGSPSINSTSSKNPDR). Residues 67–77 (GSPSINSTSSK) show a composition bias toward polar residues.

The protein belongs to the methyltransferase superfamily. LaeA methyltransferase family. In terms of assembly, component of the heterotrimeric velvet complex composed of laeA, veA and velB; VeA acting as a bridging protein between laeA and velB.

It localises to the nucleus. It carries out the reaction L-methionyl-[protein] + S-adenosyl-L-methionine = S-methyl-L-methionyl-[protein] + S-adenosyl-L-homocysteine. Functionally, methyltransferase that performs automethylation. No other methyl-accepting substrate has been identified yet. Component of the velvet transcription factor complex that acts as a global regulator for secondary metabolite gene expression. Controls the expression of the cyclopiazonic acid (CPA) gene clusters. Regulates also pigmentation and conidial head morphology. This Aspergillus fumisynnematus protein is Secondary metabolism regulator laeA.